We begin with the raw amino-acid sequence, 270 residues long: tRNA pseudouridine synthase A (270 aa).

The active-site Nucleophile is the D51. Position 109 (Y109) interacts with substrate.

The protein belongs to the tRNA pseudouridine synthase TruA family. In terms of assembly, homodimer.

The catalysed reaction is uridine(38/39/40) in tRNA = pseudouridine(38/39/40) in tRNA. In terms of biological role, formation of pseudouridine at positions 38, 39 and 40 in the anticodon stem and loop of transfer RNAs. The sequence is that of tRNA pseudouridine synthase A from Burkholderia multivorans (strain ATCC 17616 / 249).